The chain runs to 117 residues: Prefoldin subunit beta (117 aa).

Belongs to the prefoldin subunit beta family. As to quaternary structure, heterohexamer of two alpha and four beta subunits.

It localises to the cytoplasm. Molecular chaperone capable of stabilizing a range of proteins. Seems to fulfill an ATP-independent, HSP70-like function in archaeal de novo protein folding. The polypeptide is Prefoldin subunit beta (Methanococcoides burtonii (strain DSM 6242 / NBRC 107633 / OCM 468 / ACE-M)).